The chain runs to 624 residues: Pentatricopeptide repeat-containing protein At2g32630 (624 aa).

PPR repeat units lie at residues 153-187 (FEKFFDLVFRVYVDNGMFEEGLRVFDYMVKKGLSI), 188-222 (DERSCIVFLVAAKKRRRIDLCLEIFRRMVDSGVKI), 223-257 (TVYSLTIVVEGLCRRGEVEKSKKLIKEFSVKGIKP), 258-292 (EAYTYNTIINAYVKQRDFSGVEGVLKVMKKDGVVY), 293-327 (NKVTYTLLMELSVKNGKMSDAEKLFDEMRERGIES), 328-362 (DVHVYTSLISWNCRKGNMKRAFLLFDELTEKGLSP), 363-397 (SSYTYGALIDGVCKVGEMGAAEILMNEMQSKGVNI), 398-432 (TQVVFNTLIDGYCRKGMVDEASMIYDVMEQKGFQA), 433-467 (DVFTCNTIASCFNRLKRYDEAKQWLFRMMEGGVKL), 468-502 (STVSYTNLIDVYCKEGNVEEAKRLFVEMSSKGVQP), 503-537 (NAITYNVMIYAYCKQGKIKEARKLRANMEANGMDP), 538-572 (DSYTYTSLIHGECIADNVDEAMRLFSEMGLKGLDQ), and 573-607 (NSVTYTVMISGLSKAGKSDEAFGLYDEMKRKGYTI).

This sequence belongs to the PPR family. P subfamily.

The polypeptide is Pentatricopeptide repeat-containing protein At2g32630 (Arabidopsis thaliana (Mouse-ear cress)).